The chain runs to 431 residues: REST corepressor 1 (431 aa).

Positions 1 to 10 (MIEKGAEISG) are enriched in basic and acidic residues. Residues 1-53 (MIEKGAEISGKRRGRNNAANSKSLGTNVNGSNSWEEGSSSSSSDDEPGGGGMR) are disordered. Residues 17-28 (NAANSKSLGTNV) show a composition bias toward polar residues. A compositionally biased stretch (low complexity) spans 29-42 (NGSNSWEEGSSSSS). In terms of domain architecture, ELM2 spans 50–135 (GGMRVGLQYQ…KSLADLLNFT (86 aa)). In terms of domain architecture, SANT 1 spans 136–187 (PFPDEWTVEDRVLFEQAFSFHGKTFHRIQQMLPDKSIASLVKFYYSWKKTRS). The disordered stretch occupies residues 190-262 (SVMDRHARKQ…NRAKRKPPNG (73 aa)). Basic and acidic residues predominate over residues 224 to 242 (EQPKEAKKEVPKNDTVPHI). A coiled-coil region spans residues 267–314 (QEDVEAVSANANAATTVLRQLDMELVSIKRQIQNIKQTNSAFKEKLQG). The 52-residue stretch at 327-378 (KFNARWTTEEQLLAVQAIRMYGRDFQAISDVIGNKSVVQVKNFFVNYRRRFN) folds into the SANT 2 domain.

This sequence belongs to the CoREST family. Component of a BHC histone deacetylase complex that contains KDM1A. In terms of tissue distribution, expressed in territories in which neurogenesis takes place.

It localises to the nucleus. In terms of biological role, essential component of the BHC complex, a corepressor complex that represses transcription of neuron-specific genes in non-neuronal cells. The BHC complex is recruited at RE1/NRSE sites by REST and acts by deacetylating and demethylating specific sites on histones, thereby acting as a chromatin modifier. In the BHC complex, it serves as a molecular beacon for the recruitment of molecular machinery that imposes silencing across a chromosomal interval. Plays a central role in demethylation of Lys-4 of histone H3 by promoting demethylase activity of KDM1A on core histones and nucleosomal substrates. This Xenopus laevis (African clawed frog) protein is REST corepressor 1 (rcor1).